Here is a 1057-residue protein sequence, read N- to C-terminus: Collagen alpha-1(I) chain (1057 aa).

Q1 carries the pyrrolidone carboxylic acid modification. A compositionally biased stretch (basic and acidic residues) spans Q1–S10. A nonhelical region (N-terminal) region spans residues Q1–P17. The segment at Q1–A1057 is disordered. K9 carries the post-translational modification Allysine. Position 10 is a phosphoserine (S10). 4 Collagen-like domains span residues G18–K76, G75–N134, G135–E193, and G195–G252. The tract at residues G18–P1031 is triple-helical region. Residues P29, P32, P35, P44, P47, P50, P65, P80, P86, P95, and P101 each carry the 4-hydroxyproline modification. The span at P37–M56 shows a compositional bias: low complexity. Residues N68–E82 are compositionally biased toward basic and acidic residues. A 5-hydroxylysine; alternate modification is found at K104. K104 carries an O-linked (Gal...) hydroxylysine; alternate glycan. S110 carries the phosphoserine modification. A compositionally biased stretch (low complexity) spans D118 to N134. 4-hydroxyproline occurs at positions 128, 131, 137, 146, and 152. Over residues P157–A170 the composition is skewed to low complexity. Residues P172–F184 are compositionally biased toward pro residues. Residues P173, P182, P185, P212, P215, P227, P233, P242, P248, P251, and P266 each carry the 4-hydroxyproline modification. Low complexity predominate over residues A218–K269. Position 269 is a 5-hydroxylysine (K269). 10 positions are modified to 4-hydroxyproline: P275, P278, P290, P292, P299, P314, P320, P323, P329, and P335. The segment covering K287–Q296 has biased composition (low complexity). Gly residues predominate over residues G324–G333. At K344 the chain carries 5-hydroxylysine. Residues P353, P362, P368, P374, P383, P386, P395, P404, P410, P422, P431, P440, P443, P461, P479, P485, P491, P497, P503, P509, P521, P530, P542, P554, P557, P563, P569, and P578 each carry the 4-hydroxyproline modification. Residues K377–R403 show a composition bias toward low complexity. The segment covering A412–P431 has biased composition (low complexity). Residues Q473–Q500 are compositionally biased toward low complexity. 2 consecutive Collagen-like domains span residues G522–G579 and G555–P613. The segment covering N539–Q566 has biased composition (low complexity). Position 590 is a 5-hydroxylysine (K590). 4-hydroxyproline is present on residues P596, P611, and P617. Collagen-like domains lie at G618–D676 and G678–P736. Low complexity predominate over residues A623–A637. Phosphoserine is present on S626. Residues P638, P644, P647, P656, P662, P680, P689, and P698 each carry the 4-hydroxyproline modification. Low complexity predominate over residues A650–A677. K701 is subject to 5-hydroxylysine. The segment covering S706–V722 has biased composition (low complexity). 4-hydroxyproline occurs at positions 710 and 716. P724 is modified (3-hydroxyproline). 4-hydroxyproline occurs at positions 725, 734, 737, 758, 764, 767, 776, and 785. The span at E751–E760 shows a compositional bias: low complexity. The segment covering A770 to P785 has biased composition (low complexity). A compositionally biased stretch (gly residues) spans G789–G798. 4-hydroxyproline occurs at positions 803, 812, 815, 821, 836, 842, 848, 857, 863, and 869. Positions G804 to G861 constitute a Collagen-like 9 domain. Over residues P835 to A845 the composition is skewed to pro residues. K872 is subject to 5-hydroxylysine. A compositionally biased stretch (pro residues) spans S881–V896. 4-hydroxyproline is present on residues P884, P887, and P890. A compositionally biased stretch (low complexity) spans A917–P931. Collagen-like domains are found at residues G918–P976 and G972–P1030. Residues R932–L946 are compositionally biased toward basic and acidic residues. At K935 the chain carries 5-hydroxylysine. K947 is subject to 5-hydroxylysine; alternate. O-linked (Gal...) hydroxylysine; alternate glycosylation occurs at K947. Residues P959, P962, P965, P983, P998, and P1001 each carry the 4-hydroxyproline modification. The span at P965–L997 shows a compositional bias: low complexity. Position 1003 is a 3-hydroxyproline (P1003). P1004 is modified (4-hydroxyproline). Positions V1016–P1031 are enriched in pro residues. Position 1018 is a 3-hydroxyproline (P1018). P1019 carries the post-translational modification 4-hydroxyproline. P1021 is modified (3-hydroxyproline). The residue at position 1022 (P1022) is a 4-hydroxyproline. A 3-hydroxyproline modification is found at P1024. 3 positions are modified to 4-hydroxyproline: P1025, P1028, and P1031. A nonhelical region (C-terminal) region spans residues S1032 to Y1055. Residues E1046–A1057 show a composition bias toward basic and acidic residues. At K1047 the chain carries Allysine.

It belongs to the fibrillar collagen family. Trimers of one alpha 2(I) and two alpha 1(I) chains. Post-translationally, contains mostly 4-hydroxyproline. Proline residues at the third position of the tripeptide repeating unit (G-X-Y) are hydroxylated in some or all of the chains. In terms of processing, contains 3-hydroxyproline at a few sites. This modification occurs on the first proline residue in the sequence motif Gly-Pro-Hyp, where Hyp is 4-hydroxyproline. Lysine residues at the third position of the tripeptide repeating unit (G-X-Y) are 5-hydroxylated in some or all of the chains. Post-translationally, O-glycosylated on hydroxylated lysine residues. The O-linked glycan consists of a Glc-Gal disaccharide.

It localises to the secreted. It is found in the extracellular space. The protein localises to the extracellular matrix. Type I collagen is a member of group I collagen (fibrillar forming collagen). The polypeptide is Collagen alpha-1(I) chain (COL1A1) (Mammut americanum (American mastodon)).